The following is a 313-amino-acid chain: Ribosomal RNA small subunit methyltransferase I (313 aa).

Residues 1-23 are disordered; that stretch reads MASIQLARTTRGGDGVARADGTR.

The protein belongs to the methyltransferase superfamily. RsmI family.

Its subcellular location is the cytoplasm. The catalysed reaction is cytidine(1402) in 16S rRNA + S-adenosyl-L-methionine = 2'-O-methylcytidine(1402) in 16S rRNA + S-adenosyl-L-homocysteine + H(+). Its function is as follows. Catalyzes the 2'-O-methylation of the ribose of cytidine 1402 (C1402) in 16S rRNA. This chain is Ribosomal RNA small subunit methyltransferase I, found in Micromonospora olivasterospora.